Consider the following 242-residue polypeptide: Biosynthetic peptidoglycan transglycosylase (242 aa).

Residues 19 to 39 (ILAALAVFWGGGIALFSVVPV) form a helical membrane-spanning segment.

The protein belongs to the glycosyltransferase 51 family.

The protein localises to the cell inner membrane. The enzyme catalyses [GlcNAc-(1-&gt;4)-Mur2Ac(oyl-L-Ala-gamma-D-Glu-L-Lys-D-Ala-D-Ala)](n)-di-trans,octa-cis-undecaprenyl diphosphate + beta-D-GlcNAc-(1-&gt;4)-Mur2Ac(oyl-L-Ala-gamma-D-Glu-L-Lys-D-Ala-D-Ala)-di-trans,octa-cis-undecaprenyl diphosphate = [GlcNAc-(1-&gt;4)-Mur2Ac(oyl-L-Ala-gamma-D-Glu-L-Lys-D-Ala-D-Ala)](n+1)-di-trans,octa-cis-undecaprenyl diphosphate + di-trans,octa-cis-undecaprenyl diphosphate + H(+). It participates in cell wall biogenesis; peptidoglycan biosynthesis. Functionally, peptidoglycan polymerase that catalyzes glycan chain elongation from lipid-linked precursors. The chain is Biosynthetic peptidoglycan transglycosylase from Salmonella heidelberg (strain SL476).